Here is a 123-residue protein sequence, read N- to C-terminus: MHYCNKDIGSFGETIAADYIKNSGYIILERNFRCKLGEIDIIAKDKNFIVFIEVKTRYGYIYGSPSEAITFRKQNKIYKTAQLYIMKKAIHNKFYFRFDVIEVILNTLNSNYSVKLIKNAFQI.

It belongs to the UPF0102 family.

In Clostridium botulinum (strain Loch Maree / Type A3), this protein is UPF0102 protein CLK_1817.